We begin with the raw amino-acid sequence, 391 residues long: Ferrochelatase (391 aa).

Fe cation contacts are provided by His-196 and Glu-281.

Belongs to the ferrochelatase family.

The protein resides in the cytoplasm. The catalysed reaction is heme b + 2 H(+) = protoporphyrin IX + Fe(2+). It functions in the pathway porphyrin-containing compound metabolism; protoheme biosynthesis; protoheme from protoporphyrin-IX: step 1/1. In terms of biological role, catalyzes the ferrous insertion into protoporphyrin IX. This is Ferrochelatase from Prochlorococcus marinus (strain SARG / CCMP1375 / SS120).